Reading from the N-terminus, the 347-residue chain is Phenylalanine--tRNA ligase alpha subunit (347 aa).

Mg(2+) is bound at residue Glu-265.

It belongs to the class-II aminoacyl-tRNA synthetase family. Phe-tRNA synthetase alpha subunit type 1 subfamily. Tetramer of two alpha and two beta subunits. Mg(2+) is required as a cofactor.

It localises to the cytoplasm. The enzyme catalyses tRNA(Phe) + L-phenylalanine + ATP = L-phenylalanyl-tRNA(Phe) + AMP + diphosphate + H(+). The sequence is that of Phenylalanine--tRNA ligase alpha subunit from Mycolicibacterium gilvum (strain PYR-GCK) (Mycobacterium gilvum (strain PYR-GCK)).